We begin with the raw amino-acid sequence, 546 residues long: ATP-dependent RNA helicase DBP2 (546 aa).

Residues 1-56 are disordered; that stretch reads MTYGGRDQQYNKTNYKSRGGDFRGGRNSDRNSYNDRPQGGNYRGGFGGRSNYNQPQ. An omega-N-methylarginine mark is found at Arg18 and Arg43. Basic and acidic residues predominate over residues 18–33; sequence RGGDFRGGRNSDRNSY. Ser88 and Ser90 each carry phosphoserine. A Q motif motif is present at residues 113–141; it reads TTFDEAGFPDYVLNEVKAEGFDKPTGIQC. Residues 144-319 form the Helicase ATP-binding domain; that stretch reads WPMALSGRDM…ADYLNDPIQV (176 aa). Residue 157-164 participates in ATP binding; that stretch reads AATGSGKT. A DEAD box motif is present at residues 267–270; it reads DEAD. A Helicase C-terminal domain is found at 347–494; the sequence is RLNKYLETAS…NIPPELLKYD (148 aa). Lys474 is covalently cross-linked (Glycyl lysine isopeptide (Lys-Gly) (interchain with G-Cter in ubiquitin)). The tract at residues 493–546 is disordered; sequence YDRRSYGGGHPRYGGGRGGRGGYGRRGGYGGGRGGYGGNRQRDGGWGNRGRSNY. Gly residues predominate over residues 498 to 540; it reads YGGGHPRYGGGRGGRGGYGRRGGYGGGRGGYGGNRQRDGGWGN. An RNA-binding RGG-box region spans residues 505–530; the sequence is YGGGRGGRGGYGRRGGYGGGRGGYGG. Arg509, Arg512, Arg518, and Arg525 each carry dimethylated arginine; alternate. 4 positions are modified to omega-N-methylarginine; alternate: Arg509, Arg512, Arg518, and Arg525.

This sequence belongs to the DEAD box helicase family. DDX5/DBP2 subfamily. Interacts with UPF1. Associates with polysomes.

It localises to the cytoplasm. The protein resides in the nucleus. The catalysed reaction is ATP + H2O = ADP + phosphate + H(+). ATP-dependent RNA helicase involved nonsense-mediated mRNA decay and ribosome biogenesis through rRNA processing. Associates directly with chromatin, correlating with transcriptional activity. Required for assembly of mRNA-binding proteins YRA1, NAB2, and MEX67 onto poly(A)+ RNA. In Saccharomyces cerevisiae (strain ATCC 204508 / S288c) (Baker's yeast), this protein is ATP-dependent RNA helicase DBP2.